Here is a 171-residue protein sequence, read N- to C-terminus: Putative metal-dependent hydrolase BH0277 (171 aa).

Positions 64, 155, and 159 each coordinate Zn(2+).

The protein belongs to the metal hydrolase YfiT family. In terms of assembly, homodimer. The cofactor is Zn(2+).

The protein resides in the cytoplasm. Functionally, possible metal-dependent hydrolase. The sequence is that of Putative metal-dependent hydrolase BH0277 from Halalkalibacterium halodurans (strain ATCC BAA-125 / DSM 18197 / FERM 7344 / JCM 9153 / C-125) (Bacillus halodurans).